The sequence spans 539 residues: MAKDPGRVLIFDTTLRDGEQSPGASLNLEEKLAIAQQLARLGVDVIEAGFPFASPGDFAAVQKIAENVGGEEGPIICGLSRASKPDIKACANAIAPAPKKRIHTFIATSDIHLEHKLRKSRKEVLDIVPDMVGYAKSFVDDVEFSCEDAARSDLDFLYEVIELAISSGANTINIPDTVGYITPSEFGDLILNINKNVPNINEAVLSVHGHNDLGLAVANFLEAVKNGARQLECTINGIGERAGNAALEELIMALHVRRSYFNPFFGRPPESPTPLTAVRTEEITKSSRLVSNLTGMVVQPNKAIVGANAFAHESGIHQDGVLKNRLTYEIIDAKTVGLSDNKISLGKLSGRSAVRARLEDLGYDLNREDLNDAFARFKDLADRKREITDRDLEAIVSEQVQLPEALFQLKLVQVSCGTSLMPTATVTVVGEDGEEKTAVSLGTGPVDAVVRALDSLTEEPNELIEFSVKSVTEGIDALGEVTIRIRRDGNLFSGHSADTDVVVAAAQAYINALNRLVAAHGRKSIHPQHDLAKVEKKGI.

The Pyruvate carboxyltransferase domain maps to 8–269; the sequence is VLIFDTTLRD…YFNPFFGRPP (262 aa). Mn(2+) is bound by residues D17, H208, H210, and N244. The interval 408-539 is regulatory domain; that stretch reads QLKLVQVSCG…DLAKVEKKGI (132 aa).

Belongs to the alpha-IPM synthase/homocitrate synthase family. LeuA type 1 subfamily. In terms of assembly, homodimer. It depends on Mn(2+) as a cofactor.

It is found in the cytoplasm. The catalysed reaction is 3-methyl-2-oxobutanoate + acetyl-CoA + H2O = (2S)-2-isopropylmalate + CoA + H(+). Its pathway is amino-acid biosynthesis; L-leucine biosynthesis; L-leucine from 3-methyl-2-oxobutanoate: step 1/4. Its function is as follows. Catalyzes the condensation of the acetyl group of acetyl-CoA with 3-methyl-2-oxobutanoate (2-ketoisovalerate) to form 3-carboxy-3-hydroxy-4-methylpentanoate (2-isopropylmalate). The polypeptide is 2-isopropylmalate synthase (Prochlorococcus marinus (strain NATL2A)).